The following is a 700-amino-acid chain: Protein UL29/28 (700 aa).

The tract at residues 1-30 is disordered; sequence MSGRRKGCSAATASSSSSSPPSRLPLPGHA. The span at 9 to 21 shows a compositional bias: low complexity; that stretch reads SAATASSSSSSPP.

This sequence belongs to the herpesviridae US22 family. As to quaternary structure, interacts with UL38 and host HDAC1; these interactions are necessary for the HDAC1 interaction with UL38. Interacts with host MTA2.

The protein localises to the virion. The protein resides in the host nucleus. It is found in the host cytoplasm. Contributes to activation of immediate-early gene expression. This Human cytomegalovirus (strain Merlin) (HHV-5) protein is Protein UL29/28 (UL29).